We begin with the raw amino-acid sequence, 418 residues long: UDP-N-acetylglucosamine 1-carboxyvinyltransferase (418 aa).

22 to 23 is a phosphoenolpyruvate binding site; the sequence is KN. Residue Arg93 coordinates UDP-N-acetyl-alpha-D-glucosamine. The Proton donor role is filled by Cys117. Cys117 bears the 2-(S-cysteinyl)pyruvic acid O-phosphothioketal mark. Residues 122–126, Asp306, and Leu328 contribute to the UDP-N-acetyl-alpha-D-glucosamine site; that span reads RPIDL.

Belongs to the EPSP synthase family. MurA subfamily.

It localises to the cytoplasm. The catalysed reaction is phosphoenolpyruvate + UDP-N-acetyl-alpha-D-glucosamine = UDP-N-acetyl-3-O-(1-carboxyvinyl)-alpha-D-glucosamine + phosphate. It functions in the pathway cell wall biogenesis; peptidoglycan biosynthesis. In terms of biological role, cell wall formation. Adds enolpyruvyl to UDP-N-acetylglucosamine. This chain is UDP-N-acetylglucosamine 1-carboxyvinyltransferase, found in Campylobacter hominis (strain ATCC BAA-381 / DSM 21671 / CCUG 45161 / LMG 19568 / NCTC 13146 / CH001A).